We begin with the raw amino-acid sequence, 184 residues long: Large ribosomal subunit protein uL22 (184 aa).

The disordered stretch occupies residues 160-184 (PEEEVAQKKKISQKKLKKQKLMARE). The segment covering 167-184 (KKKISQKKLKKQKLMARE) has biased composition (basic residues).

The protein belongs to the universal ribosomal protein uL22 family. As to quaternary structure, component of the large ribosomal subunit. Expressed in pancreas, lung, colon, cystic duct, gall bladder, kidney and liver. Expressed at high levels in the well differentiated pancreatic tumor cell lines HPAF, COLO 357 and Capan-1, the moderately differentiated pancreatic tumor cell lines T3M-4, AsPc-1 and BxPc-3, the poorly differentiated pancreatic tumor cell line MIA PaCa-2, and the pancreatic tumor cell lines of undefined differentiation status such as SW979. Expressed at lower levels in the poorly differentiated pancreatic tumor cell lines HCG-25 and PANC-1.

It localises to the cytoplasm. Component of the large ribosomal subunit. The ribosome is a large ribonucleoprotein complex responsible for the synthesis of proteins in the cell. The polypeptide is Large ribosomal subunit protein uL22 (RPL17) (Homo sapiens (Human)).